The following is a 92-amino-acid chain: Small ribosomal subunit protein uS19 (92 aa).

This sequence belongs to the universal ribosomal protein uS19 family.

Its function is as follows. Protein S19 forms a complex with S13 that binds strongly to the 16S ribosomal RNA. The chain is Small ribosomal subunit protein uS19 from Streptococcus thermophilus (strain ATCC BAA-491 / LMD-9).